We begin with the raw amino-acid sequence, 315 residues long: Probable serine acetyltransferase 4 (315 aa).

The disordered stretch occupies residues 287–315 (AKPIIGKKAAPQRRPEELPGVTMEQRWSD).

It belongs to the transferase hexapeptide repeat family. In terms of assembly, homomultimer.

The catalysed reaction is L-serine + acetyl-CoA = O-acetyl-L-serine + CoA. It functions in the pathway amino-acid biosynthesis; L-cysteine biosynthesis; L-cysteine from L-serine: step 1/2. This chain is Probable serine acetyltransferase 4 (SAT4), found in Oryza sativa subsp. japonica (Rice).